We begin with the raw amino-acid sequence, 1070 residues long: DNA-directed RNA polymerase subunit beta (1070 aa).

Belongs to the RNA polymerase beta chain family. In plastids the minimal PEP RNA polymerase catalytic core is composed of four subunits: alpha, beta, beta', and beta''. When a (nuclear-encoded) sigma factor is associated with the core the holoenzyme is formed, which can initiate transcription.

Its subcellular location is the plastid. The protein resides in the chloroplast. The catalysed reaction is RNA(n) + a ribonucleoside 5'-triphosphate = RNA(n+1) + diphosphate. Its function is as follows. DNA-dependent RNA polymerase catalyzes the transcription of DNA into RNA using the four ribonucleoside triphosphates as substrates. In Spinacia oleracea (Spinach), this protein is DNA-directed RNA polymerase subunit beta.